We begin with the raw amino-acid sequence, 258 residues long: Phosphate import ATP-binding protein PstB (258 aa).

The ABC transporter domain maps to 12–253 (IEVKNLNFYY…PARKETEDYI (242 aa)). ATP is bound at residue 44–51 (GPSGCGKS).

Belongs to the ABC transporter superfamily. Phosphate importer (TC 3.A.1.7) family. In terms of assembly, the complex is composed of two ATP-binding proteins (PstB), two transmembrane proteins (PstC and PstA) and a solute-binding protein (PstS).

It is found in the cell inner membrane. The enzyme catalyses phosphate(out) + ATP + H2O = ADP + 2 phosphate(in) + H(+). In terms of biological role, part of the ABC transporter complex PstSACB involved in phosphate import. Responsible for energy coupling to the transport system. This chain is Phosphate import ATP-binding protein PstB, found in Bordetella avium (strain 197N).